Reading from the N-terminus, the 225-residue chain is Phosphoserine phosphatase (225 aa).

Residue Met1 is modified to N-acetylmethionine. Asp20 (nucleophile) is an active-site residue. Mg(2+)-binding residues include Asp20 and Asp22. 20–22 serves as a coordination point for L-serine; it reads DVD. Asp22 acts as the Proton donor in catalysis. Met52 lines the O-phospho-L-serine pocket. Gly53 is a binding site for phosphate. Residues 109–111 and Lys158 each bind L-serine; that span reads SGG. O-phospho-L-serine contacts are provided by residues 109–111 and Lys158; that span reads SGG. Residue Asp179 participates in Mg(2+) binding. Thr182 lines the O-phospho-L-serine pocket. Thr182 is a phosphate binding site.

Belongs to the HAD-like hydrolase superfamily. SerB family. Homodimer. Mg(2+) is required as a cofactor.

Its subcellular location is the cytoplasm. It is found in the cytosol. It catalyses the reaction O-phospho-L-serine + H2O = L-serine + phosphate. The enzyme catalyses O-phospho-D-serine + H2O = D-serine + phosphate. The protein operates within amino-acid biosynthesis; L-serine biosynthesis; L-serine from 3-phospho-D-glycerate: step 3/3. With respect to regulation, inhibited by calcium ions. In terms of biological role, catalyzes the last irreversible step in the biosynthesis of L-serine from carbohydrates, the dephosphorylation of O-phospho-L-serine to L-serine. L-serine can then be used in protein synthesis, to produce other amino acids, in nucleotide metabolism or in glutathione synthesis, or can be racemized to D-serine, a neuromodulator. May also act on O-phospho-D-serine. The polypeptide is Phosphoserine phosphatase (Homo sapiens (Human)).